A 392-amino-acid chain; its full sequence is G2/mitotic-specific cyclin-B (392 aa).

This sequence belongs to the cyclin family. Cyclin AB subfamily.

Its function is as follows. Essential for the control of the cell cycle at the G2/M (mitosis) transition. Interacts with the CDC2 protein kinase to form MPF. G2/M cyclins accumulate steadily during G2 and are abruptly destroyed at mitosis. The sequence is that of G2/mitotic-specific cyclin-B from Hydra viridissima (Green hydra).